A 492-amino-acid polypeptide reads, in one-letter code: Adenosylhomocysteinase (492 aa).

T68, D153, and E215 together coordinate substrate. T216–T218 serves as a coordination point for NAD(+). Substrate-binding residues include K245 and D249. Residues N250, G279–G284, E302, N337, I358–H360, and N406 each bind NAD(+).

It belongs to the adenosylhomocysteinase family. Requires NAD(+) as cofactor.

It localises to the cytoplasm. It carries out the reaction S-adenosyl-L-homocysteine + H2O = L-homocysteine + adenosine. Its pathway is amino-acid biosynthesis; L-homocysteine biosynthesis; L-homocysteine from S-adenosyl-L-homocysteine: step 1/1. May play a key role in the regulation of the intracellular concentration of adenosylhomocysteine. This Mycobacterium ulcerans (strain Agy99) protein is Adenosylhomocysteinase.